The following is a 602-amino-acid chain: Arginine--tRNA ligase (602 aa).

The 'HIGH' region signature appears at 138 to 148 (ANPTGPMHVGH).

This sequence belongs to the class-I aminoacyl-tRNA synthetase family. Monomer.

It localises to the cytoplasm. The enzyme catalyses tRNA(Arg) + L-arginine + ATP = L-arginyl-tRNA(Arg) + AMP + diphosphate. This Gluconobacter oxydans (strain 621H) (Gluconobacter suboxydans) protein is Arginine--tRNA ligase.